Consider the following 537-residue polypeptide: Cytochrome P450 monooxygenase ltmQ (537 aa).

A helical transmembrane segment spans residues 10–30; that stretch reads FPKLNFATIVISGATIIGIIF. N182, N188, and N310 each carry an N-linked (GlcNAc...) asparagine glycan. C476 lines the heme pocket.

It belongs to the cytochrome P450 family. Requires heme as cofactor.

Its subcellular location is the membrane. The protein operates within secondary metabolite biosynthesis. Cytochrome P450 monooxygenase; part of the gene clusters that mediates the biosynthesis of lolitrems, indole-diterpene mycotoxins that are potent tremorgens in mammals, and are synthesized by clavicipitaceous fungal endophytes in association with their grass hosts. The geranylgeranyl diphosphate (GGPP) synthase ltmG is proposed to catalyze the first step in lolitrem biosynthesis. LtmG catalyzes a series of iterative condensations of isopentenyl diphosphate (IPP) with dimethylallyl diphosphate (DMAPP), geranyl diphosphate (GPP), and farnesyl diphosphate (FPP), to form GGPP. GGPP then condenses with indole-3-glycerol phosphate to form 3-geranylgeranylindole, an acyclic intermediate, to be incorporated into paxilline. Either ltmG or ltmC could be responsible for this step, as both are putative prenyl transferases. The FAD-dependent monooxygenase ltmM then catalyzes the epoxidation of the two terminal alkenes of the geranylgeranyl moiety, which is subsequently cyclized by ltmB, to paspaline. The cytochrome P450 monooxygenases ltmQ and ltmP can sequentially oxidize paspaline to terpendole E and terpendole F. Alternatively, ltmP converts paspaline to an intermediate which is oxidized by ltmQ to terpendole F. LtmF, ltmK, ltmE and ltmJ appear to be unique to the epichloe endophytes. The prenyltransferase ltmF is involved in the 27-hydroxyl-O-prenylation. The cytochrome P450 monooxygenase ltmK is required for the oxidative acetal ring formation. The multi-functional prenyltransferase ltmE is required for C20- and C21-prenylations of the indole ring of paspalanes and acts together with the cytochrome P450 monooxygenase ltmJ to yield lolitremanes by multiple oxidations and ring closures. The stereoisomer pairs of lolitriol and lolitrem N or lolitrem B and lolitrem F may be attributed to variations in the way in which ring closure can occur under the action of ltmJ. While the major product of this pathway is lolitrem B, the prenyl transferases and cytochrome P450 monooxygenases identified in this pathway have a remarkable versatility in their regio- and stereo-specificities to generate a diverse range of metabolites that are products of a metabolic grid rather than a linear pathway. The protein is Cytochrome P450 monooxygenase ltmQ of Epichloe festucae var. lolii (Neotyphodium lolii).